An 84-amino-acid chain; its full sequence is NADH dehydrogenase [ubiquinone] 1 alpha subcomplex subunit 3 (84 aa).

Ala-2 is modified (N-acetylalanine). The helical transmembrane segment at Leu-19–Thr-39 threads the bilayer. The interval Asp-59–Leu-84 is disordered.

It belongs to the complex I NDUFA3 subunit family. As to quaternary structure, complex I is composed of 45 different subunits.

It localises to the mitochondrion inner membrane. In terms of biological role, accessory subunit of the mitochondrial membrane respiratory chain NADH dehydrogenase (Complex I), that is believed not to be involved in catalysis. Complex I functions in the transfer of electrons from NADH to the respiratory chain. The immediate electron acceptor for the enzyme is believed to be ubiquinone. The polypeptide is NADH dehydrogenase [ubiquinone] 1 alpha subcomplex subunit 3 (Ndufa3) (Mus musculus (Mouse)).